The chain runs to 442 residues: GTPase Der (442 aa).

EngA-type G domains follow at residues 4–169 (PIVA…PENN) and 178–353 (IKIA…EQAT). Residues 10-17 (GRPNVGKS), 57-61 (DTGGL), 121-124 (NKIE), 184-191 (GRPNVGKS), 231-235 (DTAGM), and 296-299 (NKWD) contribute to the GTP site. The KH-like domain occupies 354–438 (RRISTSVLNE…PMRFFIRERE (85 aa)).

This sequence belongs to the TRAFAC class TrmE-Era-EngA-EngB-Septin-like GTPase superfamily. EngA (Der) GTPase family. In terms of assembly, associates with the 50S ribosomal subunit.

Functionally, GTPase that plays an essential role in the late steps of ribosome biogenesis. The polypeptide is GTPase Der (Heliobacterium modesticaldum (strain ATCC 51547 / Ice1)).